Reading from the N-terminus, the 105-residue chain is Nitrogen fixation nifHD region GlnB-like protein 1 (105 aa).

This sequence belongs to the P(II) protein family.

Functionally, could be involved in the regulation of nitrogen fixation. This chain is Nitrogen fixation nifHD region GlnB-like protein 1 (glnBA), found in Methanobacterium ivanovii.